A 473-amino-acid chain; its full sequence is MESFTADTNSTDLHSRPLFKPQDIASMVILSLTCLLGLPGNGLVLWVAGVKMKRTVNTVWFLHLTLADFLCCLSLPFSVAHLILRGHWPYGLFLCKLIPSVIILNMFASVFLLTAISLDRCLMVHKPIWCQNHRSVRTAFAVCGCVWVVTFVMCIPVFVYRDLLVVDDYSVCGYNFDSSRAYDYWDYMYNSHLPEINPPDNSTGHVDDRTAPSSSVPARDLWTATTALQSQTFHTSPEDPFSQDSASQQPHYGGKPPTVLIATIPGGFPVEDHKSNTLNTGAFLSAHTEPSLTASSSPLYAHDFPDDYFDQLMYGNHAWTPQVAITISRLVVGFLVPFFIMITCYSLIVFRMRKTNLTKSRNKTLRVAVAVVTVFFVCWIPYHIVGILLVITDQESALREVVLPWDHMSIALASANSCFNPFLYALLGKDFRKKARQSVKGILEAAFSEELTHSTSCTQDKAPSKRNHMSTDV.

Over 1-23 the chain is Extracellular; that stretch reads MESFTADTNSTDLHSRPLFKPQD. N9 is a glycosylation site (N-linked (GlcNAc...) asparagine). A helical membrane pass occupies residues 24-46; it reads IASMVILSLTCLLGLPGNGLVLW. Residues 47-57 are Cytoplasmic-facing; the sequence is VAGVKMKRTVN. A helical membrane pass occupies residues 58–80; sequence TVWFLHLTLADFLCCLSLPFSVA. The Extracellular segment spans residues 81 to 96; it reads HLILRGHWPYGLFLCK. Residues C95 and C172 are joined by a disulfide bond. A helical transmembrane segment spans residues 97–118; the sequence is LIPSVIILNMFASVFLLTAISL. The Cytoplasmic portion of the chain corresponds to 119–139; it reads DRCLMVHKPIWCQNHRSVRTA. The helical transmembrane segment at 140–160 threads the bilayer; that stretch reads FAVCGCVWVVTFVMCIPVFVY. At 161–329 the chain is on the extracellular side; that stretch reads RDLLVVDDYS…TPQVAITISR (169 aa). 2 positions are modified to sulfotyrosine: Y174 and Y184. An N-linked (GlcNAc...) asparagine glycan is attached at N201. Residues 233-252 form a disordered region; the sequence is FHTSPEDPFSQDSASQQPHY. The residue at position 308 (Y308) is a Sulfotyrosine. The chain crosses the membrane as a helical span at residues 330 to 349; that stretch reads LVVGFLVPFFIMITCYSLIV. Over 350-366 the chain is Cytoplasmic; sequence FRMRKTNLTKSRNKTLR. Residues 367 to 389 form a helical membrane-spanning segment; sequence VAVAVVTVFFVCWIPYHIVGILL. Topologically, residues 390 to 406 are extracellular; that stretch reads VITDQESALREVVLPWD. Residues 407–427 traverse the membrane as a helical segment; the sequence is HMSIALASANSCFNPFLYALL. Residues 428 to 473 lie on the Cytoplasmic side of the membrane; the sequence is GKDFRKKARQSVKGILEAAFSEELTHSTSCTQDKAPSKRNHMSTDV. S448 carries the post-translational modification Phosphoserine. T452 carries the phosphothreonine modification.

It belongs to the G-protein coupled receptor 1 family. As to quaternary structure, interacts with VGF-derived peptide TLQP-21.

It localises to the cell membrane. Functionally, receptor for the chemotactic and inflammatory peptide anaphylatoxin C3a. This receptor stimulates chemotaxis, granule enzyme release and superoxide anion production. The sequence is that of C3a anaphylatoxin chemotactic receptor (C3ar1) from Rattus norvegicus (Rat).